The primary structure comprises 288 residues: MANAKEIRGQIKSVKNTRKITRAMEMVAASKMRRAQERMRAARPYAEKIREVLGHLAQAHPEYEHPLMQVRPVKKAGFLVVTTDRGLCGGLNVNVLRNVVQKMRELHEEGVESNLAVVGNKGLGFLRRHGAHLVAELNGLGDSPHLGDMIGPIRAMADAYAKGEVDVVYLVSSRFVNTMLQRATVEQLLPVEKPTASAEQRAELWDYIYEPEARPVLDRLMQRYVESVVYQAVIEHLACEQSARMVAMKSASDNAKRMVDDLQLAYNKARQAAITQEIAEISAGAAAV.

The protein belongs to the ATPase gamma chain family. F-type ATPases have 2 components, CF(1) - the catalytic core - and CF(0) - the membrane proton channel. CF(1) has five subunits: alpha(3), beta(3), gamma(1), delta(1), epsilon(1). CF(0) has three main subunits: a, b and c.

The protein localises to the cell inner membrane. In terms of biological role, produces ATP from ADP in the presence of a proton gradient across the membrane. The gamma chain is believed to be important in regulating ATPase activity and the flow of protons through the CF(0) complex. This Acidithiobacillus ferrooxidans (strain ATCC 23270 / DSM 14882 / CIP 104768 / NCIMB 8455) (Ferrobacillus ferrooxidans (strain ATCC 23270)) protein is ATP synthase gamma chain.